Here is a 187-residue protein sequence, read N- to C-terminus: dCTP deaminase (187 aa).

DCTP is bound by residues 110–115 (KSTYAR), 134–136 (TLE), Gln-155, Tyr-169, and Gln-179. Glu-136 (proton donor/acceptor) is an active-site residue.

It belongs to the dCTP deaminase family. In terms of assembly, homotrimer.

It catalyses the reaction dCTP + H2O + H(+) = dUTP + NH4(+). Its pathway is pyrimidine metabolism; dUMP biosynthesis; dUMP from dCTP (dUTP route): step 1/2. Catalyzes the deamination of dCTP to dUTP. This is dCTP deaminase from Bordetella pertussis (strain Tohama I / ATCC BAA-589 / NCTC 13251).